The sequence spans 106 residues: Small ribosomal subunit protein uS10 (106 aa).

Belongs to the universal ribosomal protein uS10 family. Part of the 30S ribosomal subunit.

Its function is as follows. Involved in the binding of tRNA to the ribosomes. This is Small ribosomal subunit protein uS10 from Prochlorococcus marinus (strain MIT 9515).